The chain runs to 754 residues: 5-methyltetrahydropteroyltriglutamate--homocysteine methyltransferase (754 aa).

Residues 19–22 (RELK) and Lys121 contribute to the 5-methyltetrahydropteroyltri-L-glutamate site. L-homocysteine contacts are provided by residues 423–425 (IGS) and Glu476. L-methionine-binding positions include 423-425 (IGS) and Glu476. 5-methyltetrahydropteroyltri-L-glutamate-binding positions include 507-508 (RC) and Trp553. Asp591 contacts L-homocysteine. Asp591 contributes to the L-methionine binding site. Glu597 serves as a coordination point for 5-methyltetrahydropteroyltri-L-glutamate. Zn(2+)-binding residues include His633, Cys635, and Glu657. The active-site Proton donor is His686. Residue Cys718 participates in Zn(2+) binding.

Belongs to the vitamin-B12 independent methionine synthase family. Zn(2+) serves as cofactor.

The catalysed reaction is 5-methyltetrahydropteroyltri-L-glutamate + L-homocysteine = tetrahydropteroyltri-L-glutamate + L-methionine. Its pathway is amino-acid biosynthesis; L-methionine biosynthesis via de novo pathway; L-methionine from L-homocysteine (MetE route): step 1/1. Catalyzes the transfer of a methyl group from 5-methyltetrahydrofolate to homocysteine resulting in methionine formation. This Corynebacterium efficiens (strain DSM 44549 / YS-314 / AJ 12310 / JCM 11189 / NBRC 100395) protein is 5-methyltetrahydropteroyltriglutamate--homocysteine methyltransferase.